The following is a 291-amino-acid chain: Phosphatidylglycerol--prolipoprotein diacylglyceryl transferase (291 aa).

7 helical membrane-spanning segments follow: residues 21–41, 60–80, 96–116, 130–150, 198–218, 225–245, and 260–280; these read VSLH…MWLA, LLYA…VLFY, WDGG…MIIF, FIAP…FING, SQLY…NLFI, GSVS…VEFF, and ISMG…MMVW. Arg143 serves as a coordination point for a 1,2-diacyl-sn-glycero-3-phospho-(1'-sn-glycerol).

It belongs to the Lgt family.

It localises to the cell inner membrane. The catalysed reaction is L-cysteinyl-[prolipoprotein] + a 1,2-diacyl-sn-glycero-3-phospho-(1'-sn-glycerol) = an S-1,2-diacyl-sn-glyceryl-L-cysteinyl-[prolipoprotein] + sn-glycerol 1-phosphate + H(+). It functions in the pathway protein modification; lipoprotein biosynthesis (diacylglyceryl transfer). In terms of biological role, catalyzes the transfer of the diacylglyceryl group from phosphatidylglycerol to the sulfhydryl group of the N-terminal cysteine of a prolipoprotein, the first step in the formation of mature lipoproteins. The protein is Phosphatidylglycerol--prolipoprotein diacylglyceryl transferase of Klebsiella pneumoniae (strain 342).